The following is a 423-amino-acid chain: Probable electron transfer flavoprotein-quinone oxidoreductase YgcN (423 aa).

Position 7–21 (7–21) interacts with FAD; sequence IIIIGAGIAGTACAL.

The protein belongs to the ETF-QO/FixC family. FAD serves as cofactor.

Its function is as follows. Probably accepts electrons from YgcQ/YgcR and reduces a quinone. The protein is Probable electron transfer flavoprotein-quinone oxidoreductase YgcN (ygcN) of Escherichia coli (strain K12).